Here is a 619-residue protein sequence, read N- to C-terminus: Protein DFG16 (619 aa).

A topological domain (extracellular) is located at residue M1. Residues 2–22 (IIRLHFYYLLTLVYHLGLVGA) traverse the membrane as a helical segment. Residues 23–167 (YEKAARKRIQ…KDPFPLGMIM (145 aa)) are Cytoplasmic-facing. The segment at 33–54 (PPDLIPGPPGHKLGDERPPHYD) is disordered. Basic and acidic residues predominate over residues 44–54 (KLGDERPPHYD). The helical transmembrane segment at 168–188 (ITFASGCICVATWMLFLVVLL) threads the bilayer. Over 189 to 203 (LPSDNHNRRNKVVHV) the chain is Extracellular. A helical membrane pass occupies residues 204 to 224 (YVLFSAIIRTVFLNETIAVIF). The Cytoplasmic segment spans residues 225–291 (DSQYHDDYQD…IPFKMKKGTH (67 aa)). Residues 292 to 312 (IIITVGCFLSLADNILFANLL) form a helical membrane-spanning segment. Residues 313–321 (WRKNLVVLK) lie on the Extracellular side of the membrane. A helical membrane pass occupies residues 322-342 (VFYKLIELLIYTIFISIICYF). Residues 343–378 (TWHNFAYILLPKTAEINTDGKCKTKLRILWENYHET) lie on the Cytoplasmic side of the membrane. Residues 379 to 399 (IPLLAYNILIFILFYFTTIFF) traverse the membrane as a helical segment. The Extracellular segment spans residues 400-410 (AAFTKHVRGWT). Residues 411-431 (FNFVHLLKVLITVNVWGLIGV) form a helical membrane-spanning segment. Over 432-619 (LEKRELHISK…NHIYNYENSD (188 aa)) the chain is Cytoplasmic. Polar residues-rich tracts occupy residues 485-504 (KSNT…SPTW) and 526-549 (KFGQ…TLSK). Disordered stretches follow at residues 485-506 (KSNT…TWKS) and 520-586 (IMKS…ADKH). Residues 552–561 (QLLRKPRRKT) show a composition bias toward basic residues.

The protein localises to the membrane. Functionally, involved in invasion during filamentous growth. This is Protein DFG16 (DFG16) from Saccharomyces cerevisiae (strain ATCC 204508 / S288c) (Baker's yeast).